The following is a 319-amino-acid chain: Phosphatidylglycerol--prolipoprotein diacylglyceryl transferase (319 aa).

Transmembrane regions (helical) follow at residues 21–41 (PIPI…AIWL), 50–70 (GGNP…GIIG), and 98–118 (NGGL…AVFF). Residue Arg-144 participates in a 1,2-diacyl-sn-glycero-3-phospho-(1'-sn-glycerol) binding. The next 2 helical transmembrane spans lie at 191–211 (VHPT…LLMW) and 254–274 (INTI…FLLK). Positions 295–319 (AVASPDGKPLPKAGEGIDGETPSTR) are disordered.

It belongs to the Lgt family.

Its subcellular location is the cell membrane. The enzyme catalyses L-cysteinyl-[prolipoprotein] + a 1,2-diacyl-sn-glycero-3-phospho-(1'-sn-glycerol) = an S-1,2-diacyl-sn-glyceryl-L-cysteinyl-[prolipoprotein] + sn-glycerol 1-phosphate + H(+). The protein operates within protein modification; lipoprotein biosynthesis (diacylglyceryl transfer). In terms of biological role, catalyzes the transfer of the diacylglyceryl group from phosphatidylglycerol to the sulfhydryl group of the N-terminal cysteine of a prolipoprotein, the first step in the formation of mature lipoproteins. The chain is Phosphatidylglycerol--prolipoprotein diacylglyceryl transferase from Corynebacterium glutamicum (strain R).